Consider the following 264-residue polypeptide: Thymidylate synthase (264 aa).

A dUMP-binding site is contributed by R21. Residue H51 coordinates (6R)-5,10-methylene-5,6,7,8-tetrahydrofolate. Residue 126–127 participates in dUMP binding; that stretch reads RR. Catalysis depends on C146, which acts as the Nucleophile. Residues 166–169, N177, and 207–209 contribute to the dUMP site; these read RSCD and HLY. D169 lines the (6R)-5,10-methylene-5,6,7,8-tetrahydrofolate pocket. A263 is a (6R)-5,10-methylene-5,6,7,8-tetrahydrofolate binding site.

It belongs to the thymidylate synthase family. Bacterial-type ThyA subfamily. In terms of assembly, homodimer.

It localises to the cytoplasm. It catalyses the reaction dUMP + (6R)-5,10-methylene-5,6,7,8-tetrahydrofolate = 7,8-dihydrofolate + dTMP. It functions in the pathway pyrimidine metabolism; dTTP biosynthesis. Catalyzes the reductive methylation of 2'-deoxyuridine-5'-monophosphate (dUMP) to 2'-deoxythymidine-5'-monophosphate (dTMP) while utilizing 5,10-methylenetetrahydrofolate (mTHF) as the methyl donor and reductant in the reaction, yielding dihydrofolate (DHF) as a by-product. This enzymatic reaction provides an intracellular de novo source of dTMP, an essential precursor for DNA biosynthesis. The sequence is that of Thymidylate synthase from Serratia proteamaculans (strain 568).